Here is a 462-residue protein sequence, read N- to C-terminus: Integrator complex subunit 12 (462 aa).

The interval 42 to 132 (GIDSSYRPSQ…PETQSSPITV (91 aa)) is disordered. Positions 59–86 (ISSTKNISIKQEPKISSSLPSGNNNGKV) are enriched in polar residues. A Glycyl lysine isopeptide (Lys-Gly) (interchain with G-Cter in SUMO2) cross-link involves residue lysine 68. Positions 88–124 (TTEKVKKEAEKRPADKMKSDITEGVDIPKKPRLEKPE) are enriched in basic and acidic residues. Serine 128 is modified (phosphoserine). The PHD-type zinc-finger motif lies at 159-215 (GLACVVCRQMMVASGNQLVECQECHNLYHRDCHKPQVTDKEANDPRLVWYCARCTRQ). Lysine 254 participates in a covalent cross-link: Glycyl lysine isopeptide (Lys-Gly) (interchain with G-Cter in SUMO2). The segment covering 301-328 (SSAGPSTAKLSSTTQNNTGKPATSSANQ) has biased composition (polar residues). The interval 301 to 462 (SSAGPSTAKL…KKAAQKKLKK (162 aa)) is disordered. 2 stretches are compositionally biased toward low complexity: residues 347–358 (KIGSNNSTTPTV) and 382–437 (VSKV…GPTS). Basic residues predominate over residues 449–462 (QMVKKKAAQKKLKK).

The protein belongs to the Integrator subunit 12 family. As to quaternary structure, component of the Integrator complex, composed of core subunits INTS1, INTS2, INTS3, INTS4, INTS5, INTS6, INTS7, INTS8, INTS9/RC74, INTS10, INTS11/CPSF3L, INTS12, INTS13, INTS14 and INTS15. The core complex associates with protein phosphatase 2A subunits PPP2CA and PPP2R1A, to form the Integrator-PP2A (INTAC) complex. Post-translationally, dephosphorylated at Ser-128 by the PNUTS-PP1 complex, promoting RNA polymerase II transcription pause-release.

The protein resides in the nucleus. Its function is as follows. Component of the integrator complex, a multiprotein complex that terminates RNA polymerase II (Pol II) transcription in the promoter-proximal region of genes. The integrator complex provides a quality checkpoint during transcription elongation by driving premature transcription termination of transcripts that are unfavorably configured for transcriptional elongation: the complex terminates transcription by (1) catalyzing dephosphorylation of the C-terminal domain (CTD) of Pol II subunit POLR2A/RPB1 and SUPT5H/SPT5, (2) degrading the exiting nascent RNA transcript via endonuclease activity and (3) promoting the release of Pol II from bound DNA. The integrator complex is also involved in terminating the synthesis of non-coding Pol II transcripts, such as enhancer RNAs (eRNAs), small nuclear RNAs (snRNAs), telomerase RNAs and long non-coding RNAs (lncRNAs). Mediates recruitment of cytoplasmic dynein to the nuclear envelope, probably as component of the integrator complex. This Pongo abelii (Sumatran orangutan) protein is Integrator complex subunit 12 (INTS12).